The chain runs to 547 residues: KsdD-like steroid dehydrogenase MSMEG_5835 (547 aa).

5–36 contacts FAD; that stretch reads DVIVVGAGLAGLVAACELVERGHSVIIVDQEN.

This sequence belongs to the FAD-dependent oxidoreductase 2 family. FAD serves as cofactor.

It participates in lipid metabolism; steroid biosynthesis. Its function is as follows. Able to catalyze the elimination of the C-1 and C-2 hydrogen atoms of the A-ring from the polycyclic ring structure of 3-ketosteroids, but the ketosteroid dehydrogenase activity is low compared to KsdD in the cholesterol degradation process. The low activity could be due to different substrate specificity. This chain is KsdD-like steroid dehydrogenase MSMEG_5835, found in Mycolicibacterium smegmatis (strain ATCC 700084 / mc(2)155) (Mycobacterium smegmatis).